Reading from the N-terminus, the 214-residue chain is tRNA (guanine-N(7)-)-methyltransferase (214 aa).

S-adenosyl-L-methionine-binding residues include Glu-43, Glu-68, Asp-95, and Asp-117. Residue Asp-117 is part of the active site. Substrate is bound by residues Lys-121, Asp-153, and 190-193 (TEYE).

The protein belongs to the class I-like SAM-binding methyltransferase superfamily. TrmB family.

The catalysed reaction is guanosine(46) in tRNA + S-adenosyl-L-methionine = N(7)-methylguanosine(46) in tRNA + S-adenosyl-L-homocysteine. It participates in tRNA modification; N(7)-methylguanine-tRNA biosynthesis. Functionally, catalyzes the formation of N(7)-methylguanine at position 46 (m7G46) in tRNA. This Staphylococcus haemolyticus (strain JCSC1435) protein is tRNA (guanine-N(7)-)-methyltransferase.